The chain runs to 417 residues: Tyrosine--tRNA ligase (417 aa).

Tyr39 provides a ligand contact to L-tyrosine. Residues Pro44–Ser53 carry the 'HIGH' region motif. L-tyrosine is bound by residues Tyr176 and Gln180. Residues Lys236–Ser240 carry the 'KMSKS' region motif. Lys239 provides a ligand contact to ATP. The S4 RNA-binding domain occupies Thr350–Leu417.

It belongs to the class-I aminoacyl-tRNA synthetase family. TyrS type 1 subfamily. Homodimer.

Its subcellular location is the cytoplasm. The enzyme catalyses tRNA(Tyr) + L-tyrosine + ATP = L-tyrosyl-tRNA(Tyr) + AMP + diphosphate + H(+). Its function is as follows. Catalyzes the attachment of tyrosine to tRNA(Tyr) in a two-step reaction: tyrosine is first activated by ATP to form Tyr-AMP and then transferred to the acceptor end of tRNA(Tyr). The protein is Tyrosine--tRNA ligase of Bartonella henselae (strain ATCC 49882 / DSM 28221 / CCUG 30454 / Houston 1) (Rochalimaea henselae).